A 512-amino-acid chain; its full sequence is Alanine--glyoxylate aminotransferase 2, mitochondrial (512 aa).

The transit peptide at 1 to 39 (MSLAWRTLQKAFYLETSLRILQMRPSLSCASRIYVPKLT) directs the protein to the mitochondrion. Lys55 bears the N6-acetyllysine mark. An N6-acetyllysine; alternate modification is found at Lys69. Lys69 is subject to N6-succinyllysine; alternate. Residue Lys82 is modified to N6-acetyllysine. At Lys260 the chain carries N6-acetyllysine; alternate. At Lys260 the chain carries N6-succinyllysine; alternate. Lys302 is modified (N6-succinyllysine). N6-(pyridoxal phosphate)lysine is present on Lys348. N6-acetyllysine; alternate is present on residues Lys415 and Lys418. N6-succinyllysine; alternate is present on residues Lys415 and Lys418. At Lys452 the chain carries N6-acetyllysine.

The protein belongs to the class-III pyridoxal-phosphate-dependent aminotransferase family. In terms of assembly, homotetramer. The cofactor is pyridoxal 5'-phosphate. As to expression, expressed in the liver, lung and kidney.

The protein localises to the mitochondrion. It carries out the reaction glyoxylate + L-alanine = glycine + pyruvate. It catalyses the reaction (R)-3-amino-2-methylpropanoate + pyruvate = 2-methyl-3-oxopropanoate + L-alanine. The catalysed reaction is 3-oxopropanoate + L-alanine = beta-alanine + pyruvate. The enzyme catalyses 2-oxobutanoate + L-alanine = (2S)-2-aminobutanoate + pyruvate. It carries out the reaction N(omega),N(omega)-dimethyl-L-arginine + pyruvate = 5-(3,3-dimethylguanidino)-2-oxopentanoate + L-alanine. It catalyses the reaction N(omega),N('omega)-dimethyl-L-arginine + pyruvate = 5-(3,3'-dimethylguanidino)-2-oxopentanoate + L-alanine. The catalysed reaction is N(omega),N(omega)-dimethyl-L-arginine + glyoxylate = 5-(3,3-dimethylguanidino)-2-oxopentanoate + glycine. The enzyme catalyses N(omega),N('omega)-dimethyl-L-arginine + glyoxylate = 5-(3,3'-dimethylguanidino)-2-oxopentanoate + glycine. It carries out the reaction N(omega)-methyl-L-arginine + pyruvate = 5-(3-methylguanidino)-2-oxopentanoate + L-alanine. It catalyses the reaction N(omega)-methyl-L-arginine + glyoxylate = 5-(3-methylguanidino)-2-oxopentanoate + glycine. The catalysed reaction is L-ornithine + pyruvate = 5-amino-2-oxopentanoate + L-alanine. The enzyme catalyses L-ornithine + glyoxylate = 5-amino-2-oxopentanoate + glycine. It carries out the reaction (2S)-2-aminobutanoate + glyoxylate = 2-oxobutanoate + glycine. It catalyses the reaction N(omega),N(omega)-dimethyl-L-arginine + oxaloacetate = 5-(3,3-dimethylguanidino)-2-oxopentanoate + L-aspartate. The catalysed reaction is oxaloacetate + L-alanine = L-aspartate + pyruvate. The enzyme catalyses N(omega),N(omega)-dimethyl-L-arginine + 2-oxobutanoate = 5-(3,3-dimethylguanidino)-2-oxopentanoate + (2S)-2-aminobutanoate. It carries out the reaction 2-oxopentanoate + N(omega),N(omega)-dimethyl-L-arginine = 5-(3,3-dimethylguanidino)-2-oxopentanoate + L-2-aminopentanoate. It catalyses the reaction 2-oxohexanoate + N(omega),N(omega)-dimethyl-L-arginine = L-2-aminohexanoate + 5-(3,3-dimethylguanidino)-2-oxopentanoate. Its activity is regulated as follows. Inhibited by 5-fluorouracil and 6-fluorouracil. Inhibited by phenylhydrazine, hydroxylamine, l-amino-L-proline, para-chloromercuribenzoate and HgCl2. Its function is as follows. Multifunctional aminotransferase with a broad substrate specificity. Catalyzes the conversion of glyoxylate to glycine using alanine as the amino donor. Catalyzes metabolism of not L- but the D-isomer of D-beta-aminoisobutyric acid to generate 2-methyl-3-oxopropanoate and alanine. Catalyzes the transfer of the amino group from beta-alanine to pyruvate to yield L-alanine and 3-oxopropanoate. Can metabolize NG-monomethyl-L-arginine (NMMA), asymmetric NG,NG-dimethyl-L-arginine (ADMA) and symmetric NG,N'G-dimethyl-L-arginine (SDMA). ADMA is a potent inhibitor of nitric-oxide (NO) synthase, and this activity provides mechanism through which the kidney regulates blood pressure. This is Alanine--glyoxylate aminotransferase 2, mitochondrial (Agxt2) from Rattus norvegicus (Rat).